Consider the following 1433-residue polypeptide: Probable ATP-dependent RNA helicase spindle-E (1433 aa).

A Helicase ATP-binding domain is found at 126 to 294 (INAINENPVV…FANERSAPPV (169 aa)). 139 to 146 (GETGCGKT) is a binding site for ATP. Positions 240 to 243 (DEVH) match the DEAH box motif. The 172-residue stretch at 355-526 (TGKSYNQSLR…NCVLKAKELK (172 aa)) folds into the Helicase C-terminal domain. Residues 935-998 (AGAITKGLML…RLMSQDLLRH (64 aa)) enclose the Tudor domain.

Belongs to the DEAD box helicase family. DEAH subfamily.

The protein resides in the cytoplasm. It carries out the reaction ATP + H2O = ADP + phosphate + H(+). Probable ATP-binding RNA helicase which plays a central role during spermatogenesis and oogenesis by repressing transposable elements and preventing their mobilization, which is essential for the germline integrity. Acts via the piRNA metabolic process, which mediates the repression of transposable elements during meiosis by forming complexes composed of piRNAs and Piwi and govern the methylation and subsequent repression of transposons. Involved in the repression of LTR retrotransposon copia. Also involved in telomere regulation by repressing specialized telomeric retroelements HeT-A, TAHRE, and TART; Drosophila telomeres being maintained by transposition of specialized telomeric retroelements. Involved in telomeric trans-silencing, a repression mechanism by which a transposon or a transgene inserted in subtelomeric heterochromatin has the capacity to repress in trans in the female germline, a homologous transposon, or transgene located in euchromatin. Involved in the repression of testis-expressed Stellate genes by the homologous Su(Ste) repeats. Required for anteroposterior and dorsoventral axis formation during oogenesis. This is Probable ATP-dependent RNA helicase spindle-E (spn-E) from Drosophila pseudoobscura pseudoobscura (Fruit fly).